A 219-amino-acid polypeptide reads, in one-letter code: NAD(P)H-quinone oxidoreductase subunit I (219 aa).

2 consecutive 4Fe-4S ferredoxin-type domains span residues 55-84 and 95-124; these read GRIHYEFDKCIACEVCVRVCPINLPVVDWV and RNYSIDFGVCIFCGNCVEYCPTNCLSMTEE. [4Fe-4S] cluster is bound by residues cysteine 64, cysteine 67, cysteine 70, cysteine 74, cysteine 104, cysteine 107, cysteine 110, and cysteine 114. The tract at residues 192-219 is disordered; sequence LKAAGSMKAAEDERESSSSASNMEESAG. Residues 208-219 are compositionally biased toward low complexity; sequence SSSASNMEESAG.

This sequence belongs to the complex I 23 kDa subunit family. NDH-1 is composed of at least 11 different subunits. [4Fe-4S] cluster serves as cofactor.

Its subcellular location is the cellular thylakoid membrane. The enzyme catalyses a plastoquinone + NADH + (n+1) H(+)(in) = a plastoquinol + NAD(+) + n H(+)(out). It carries out the reaction a plastoquinone + NADPH + (n+1) H(+)(in) = a plastoquinol + NADP(+) + n H(+)(out). Functionally, NDH-1 shuttles electrons from an unknown electron donor, via FMN and iron-sulfur (Fe-S) centers, to quinones in the respiratory and/or the photosynthetic chain. The immediate electron acceptor for the enzyme in this species is believed to be plastoquinone. Couples the redox reaction to proton translocation, and thus conserves the redox energy in a proton gradient. The chain is NAD(P)H-quinone oxidoreductase subunit I from Synechococcus sp. (strain CC9311).